Consider the following 662-residue polypeptide: UvrABC system protein B (662 aa).

Positions 31-188 (DNIEGGEKAQ…NDLVDIQFER (158 aa)) constitute a Helicase ATP-binding domain. 44–51 (GATGTGKT) is a binding site for ATP. Positions 97–120 (YYDYYQPEAYVPSSDTYIEKDSSV) match the Beta-hairpin motif. Positions 435-601 (QIDDLLGEIN…TIKKEIRDLI (167 aa)) constitute a Helicase C-terminal domain. A UVR domain is found at 626 to 661 (KELVKKLEKQMQEAVEVLDFELAAQIRDMMLEVKAL).

It belongs to the UvrB family. In terms of assembly, forms a heterotetramer with UvrA during the search for lesions. Interacts with UvrC in an incision complex.

Its subcellular location is the cytoplasm. Functionally, the UvrABC repair system catalyzes the recognition and processing of DNA lesions. A damage recognition complex composed of 2 UvrA and 2 UvrB subunits scans DNA for abnormalities. Upon binding of the UvrA(2)B(2) complex to a putative damaged site, the DNA wraps around one UvrB monomer. DNA wrap is dependent on ATP binding by UvrB and probably causes local melting of the DNA helix, facilitating insertion of UvrB beta-hairpin between the DNA strands. Then UvrB probes one DNA strand for the presence of a lesion. If a lesion is found the UvrA subunits dissociate and the UvrB-DNA preincision complex is formed. This complex is subsequently bound by UvrC and the second UvrB is released. If no lesion is found, the DNA wraps around the other UvrB subunit that will check the other stand for damage. This is UvrABC system protein B from Streptococcus pneumoniae (strain ATCC 700669 / Spain 23F-1).